We begin with the raw amino-acid sequence, 465 residues long: Argininosuccinate lyase (465 aa).

The protein belongs to the lyase 1 family. Argininosuccinate lyase subfamily.

The protein localises to the cytoplasm. It carries out the reaction 2-(N(omega)-L-arginino)succinate = fumarate + L-arginine. It participates in amino-acid biosynthesis; L-arginine biosynthesis; L-arginine from L-ornithine and carbamoyl phosphate: step 3/3. The sequence is that of Argininosuccinate lyase from Variovorax paradoxus (strain S110).